Here is a 239-residue protein sequence, read N- to C-terminus: MSLRAVVLTLFPEMFPGPLGHSIAGKALETGAWSIEAVDIRSFATDRHHTVDDSPFGGGAGMVMRPDVVDAAIAASWPGDGPLVYLTPRGRVLDQALVRELAQAPSLTLLCGRYEGVDQRVLDERGMLEISIGDYVLSGGEAAAQVLLDAVVRLLPGVVGKTESLEDESFERGLLEYPHYTRPAEWRGRTVPEVLTSGHHQKVSDWRQARSEEITQTRRPDLWARYVAARTSLDRGCGQ.

Residues glycine 112 and 132 to 137 (IGDYVL) each bind S-adenosyl-L-methionine.

Belongs to the RNA methyltransferase TrmD family. As to quaternary structure, homodimer.

The protein localises to the cytoplasm. The catalysed reaction is guanosine(37) in tRNA + S-adenosyl-L-methionine = N(1)-methylguanosine(37) in tRNA + S-adenosyl-L-homocysteine + H(+). Its function is as follows. Specifically methylates guanosine-37 in various tRNAs. In Rhodospirillum rubrum (strain ATCC 11170 / ATH 1.1.1 / DSM 467 / LMG 4362 / NCIMB 8255 / S1), this protein is tRNA (guanine-N(1)-)-methyltransferase.